The primary structure comprises 264 residues: Small ribosomal subunit protein uS2 (264 aa).

It belongs to the universal ribosomal protein uS2 family.

In Latilactobacillus sakei subsp. sakei (strain 23K) (Lactobacillus sakei subsp. sakei), this protein is Small ribosomal subunit protein uS2.